The primary structure comprises 1762 residues: Non-reducing polyketide synthase PKS8-1 (1762 aa).

The tract at residues 17–247 (DIYRGLHNHS…ARYIELPVYG (231 aa)) is N-terminal acylcarrier protein transacylase domain (SAT). Positions 385 to 819 (QSKLAITGIS…GGNTTMVLEE (435 aa)) constitute a Ketosynthase family 3 (KS3) domain. Catalysis depends on for beta-ketoacyl synthase activity residues Cys-558, His-694, and His-737. Residues 920-1240 (FSFTGQGASH…MAALHLTGVA (321 aa)) are malonyl-CoA:ACP transacylase (MAT) domain. A product template (PT) domain region spans residues 1308-1622 (TSTVQQVIAL…PRILLNRFFS (315 aa)). The tract at residues 1312 to 1448 (QQVIALEVEG…GDANDWLSSW (137 aa)) is N-terminal hotdog fold. Residues 1312 to 1618 (QQVIALEVEG…FRSYPRILLN (307 aa)) form the PKS/mFAS DH domain. Catalysis depends on His-1344, which acts as the Proton acceptor; for dehydratase activity. Positions 1471-1618 (ASRFTRNMAY…FRSYPRILLN (148 aa)) are C-terminal hotdog fold. Residue Asp-1529 is the Proton donor; for dehydratase activity of the active site. The interval 1632–1689 (RAGNAATVTPQVTIPKPPSSLKTPAPANPSRRDSGVESKPLPPPQPKQAPPSTDSENS) is disordered. Positions 1671 to 1680 (PLPPPQPKQA) are enriched in pro residues. The region spanning 1685–1762 (DSENSTISKA…DMRRWLEEHY (78 aa)) is the Carrier domain. O-(pantetheine 4'-phosphoryl)serine is present on Ser-1722.

The catalysed reaction is holo-[ACP] + 8 malonyl-CoA + 8 H(+) = atrochrysone carboxyl-[ACP] + 8 CO2 + 8 CoA + 2 H2O. It participates in secondary metabolite biosynthesis. Its function is as follows. Non-reducing polyketide synthase; part of the gene cluster that mediates the biosynthesis of an emodin derivative that may be involved in black Sigatoka disease of banana. The pathway begins with the synthesis of atrochrysone thioester by the polyketide synthase PKS8-1. The atrochrysone carboxyl ACP thioesterase MYCFIDRAFT_190111 then breaks the thioester bond and releases the atrochrysone carboxylic acid from PKS8-1. The decarboxylase MYCFIDRAFT_34057 then catalyzes the concerted decarboxylation-elimination required to convert atochrysone carboxylic acid into emodin anthrone, which is further oxidized to emodin by the anthrone oxygenase MYCFIDRAFT_34418. The functions of the other tailoring enzymes as well as the final product of the cluster have still to be identified. This Pseudocercospora fijiensis (strain CIRAD86) (Black leaf streak disease fungus) protein is Non-reducing polyketide synthase PKS8-1 (PKS8-1).